A 149-amino-acid polypeptide reads, in one-letter code: 3-dehydroquinate dehydratase (149 aa).

The active-site Proton acceptor is Y24. Substrate contacts are provided by N75, H81, and D88. H101 (proton donor) is an active-site residue. Substrate-binding positions include 102 to 103 (LS) and R112.

This sequence belongs to the type-II 3-dehydroquinase family. Homododecamer.

It carries out the reaction 3-dehydroquinate = 3-dehydroshikimate + H2O. Its pathway is metabolic intermediate biosynthesis; chorismate biosynthesis; chorismate from D-erythrose 4-phosphate and phosphoenolpyruvate: step 3/7. Catalyzes a trans-dehydration via an enolate intermediate. This is 3-dehydroquinate dehydratase from Bartonella tribocorum (strain CIP 105476 / IBS 506).